The following is a 430-amino-acid chain: Trigger factor (430 aa).

The PPIase FKBP-type domain maps to 163–248 (GNIAIIDFKG…IKDIKVKELP (86 aa)).

It belongs to the FKBP-type PPIase family. Tig subfamily.

The protein resides in the cytoplasm. It carries out the reaction [protein]-peptidylproline (omega=180) = [protein]-peptidylproline (omega=0). In terms of biological role, involved in protein export. Acts as a chaperone by maintaining the newly synthesized protein in an open conformation. Functions as a peptidyl-prolyl cis-trans isomerase. The polypeptide is Trigger factor (Clostridium botulinum (strain Langeland / NCTC 10281 / Type F)).